The sequence spans 153 residues: 6,7-dimethyl-8-ribityllumazine synthase (153 aa).

5-amino-6-(D-ribitylamino)uracil-binding positions include Phe22, 56-58 (AFE), and 80-82 (AVI). 85 to 86 (GT) contributes to the (2S)-2-hydroxy-3-oxobutyl phosphate binding site. His88 (proton donor) is an active-site residue. Phe113 contacts 5-amino-6-(D-ribitylamino)uracil. Residue Arg127 participates in (2S)-2-hydroxy-3-oxobutyl phosphate binding.

This sequence belongs to the DMRL synthase family. As to quaternary structure, forms an icosahedral capsid composed of 60 subunits, arranged as a dodecamer of pentamers.

The enzyme catalyses (2S)-2-hydroxy-3-oxobutyl phosphate + 5-amino-6-(D-ribitylamino)uracil = 6,7-dimethyl-8-(1-D-ribityl)lumazine + phosphate + 2 H2O + H(+). It functions in the pathway cofactor biosynthesis; riboflavin biosynthesis; riboflavin from 2-hydroxy-3-oxobutyl phosphate and 5-amino-6-(D-ribitylamino)uracil: step 1/2. Catalyzes the formation of 6,7-dimethyl-8-ribityllumazine by condensation of 5-amino-6-(D-ribitylamino)uracil with 3,4-dihydroxy-2-butanone 4-phosphate. This is the penultimate step in the biosynthesis of riboflavin. In Hydrogenovibrio crunogenus (strain DSM 25203 / XCL-2) (Thiomicrospira crunogena), this protein is 6,7-dimethyl-8-ribityllumazine synthase.